The following is a 452-amino-acid chain: Isocitrate dehydrogenase [NADP], mitochondrial (452 aa).

The N-terminal 39 residues, Met-1–Tyr-39, are a transit peptide targeting the mitochondrion. 4 positions are modified to N6-acetyllysine: Lys-45, Lys-48, Lys-67, and Lys-69. Residues Lys-80 and Lys-106 each carry the N6-acetyllysine; alternate modification. An N6-succinyllysine; alternate mark is found at Lys-80 and Lys-106. Residues Thr-115–Thr-117 and Arg-122 each bind NADP(+). Thr-117 contributes to the substrate binding site. Substrate contacts are provided by residues Ser-134 to Arg-140 and Arg-149. Lys-155 is modified (N6-acetyllysine). Position 166 is an N6-acetyllysine; alternate (Lys-166). At Lys-166 the chain carries N6-succinyllysine; alternate. Arg-172 serves as a coordination point for substrate. 2 positions are modified to N6-acetyllysine; alternate: Lys-180 and Lys-193. Residues Lys-180 and Lys-193 each carry the N6-succinyllysine; alternate modification. Position 199 is an N6-acetyllysine (Lys-199). Position 256 is an N6-acetyllysine; alternate (Lys-256). Lys-256 bears the N6-succinyllysine; alternate mark. Lys-263, Lys-272, Lys-275, and Lys-280 each carry N6-acetyllysine. Lys-282 is subject to N6-acetyllysine; alternate. N6-succinyllysine; alternate is present on Lys-282. Position 291 (Asp-291) interacts with Mn(2+). Lys-299 is an NADP(+) binding site. Mn(2+) is bound at residue Asp-314. Residues Gly-349 to His-354 and Asn-367 contribute to the NADP(+) site. Residue Lys-384 is modified to N6-acetyllysine; alternate. Lys-384 bears the N6-succinyllysine; alternate mark. N6-acetyllysine is present on residues Lys-400, Lys-413, and Lys-442.

The protein belongs to the isocitrate and isopropylmalate dehydrogenases family. As to quaternary structure, homodimer. Mg(2+) is required as a cofactor. Requires Mn(2+) as cofactor. Post-translationally, acetylation at Lys-413 dramatically reduces catalytic activity. Deacetylated by SIRT3.

It localises to the mitochondrion. The enzyme catalyses D-threo-isocitrate + NADP(+) = 2-oxoglutarate + CO2 + NADPH. Functionally, plays a role in intermediary metabolism and energy production. It may tightly associate or interact with the pyruvate dehydrogenase complex. The protein is Isocitrate dehydrogenase [NADP], mitochondrial (IDH2) of Macaca fascicularis (Crab-eating macaque).